Consider the following 137-residue polypeptide: Ribosomal RNA large subunit methyltransferase H (137 aa).

Residues leucine 56, glycine 85, and leucine 104–phenylalanine 109 contribute to the S-adenosyl-L-methionine site.

This sequence belongs to the RNA methyltransferase RlmH family. As to quaternary structure, homodimer.

It localises to the cytoplasm. The catalysed reaction is pseudouridine(1915) in 23S rRNA + S-adenosyl-L-methionine = N(3)-methylpseudouridine(1915) in 23S rRNA + S-adenosyl-L-homocysteine + H(+). Functionally, specifically methylates the pseudouridine at position 1915 (m3Psi1915) in 23S rRNA. This chain is Ribosomal RNA large subunit methyltransferase H, found in Prochlorococcus marinus (strain MIT 9515).